The primary structure comprises 218 residues: PKHD-type hydroxylase Sala_1910 (218 aa).

The 99-residue stretch at 74–172 (RIAPPLLTRY…RLVAITFIQS (99 aa)) folds into the Fe2OG dioxygenase domain. Residues His-92, Asp-94, and His-153 each contribute to the Fe cation site. Arg-163 lines the 2-oxoglutarate pocket.

Fe(2+) serves as cofactor. L-ascorbate is required as a cofactor.

The sequence is that of PKHD-type hydroxylase Sala_1910 from Sphingopyxis alaskensis (strain DSM 13593 / LMG 18877 / RB2256) (Sphingomonas alaskensis).